The primary structure comprises 2876 residues: Nipped-B-like protein B (2876 aa).

2 stretches are compositionally biased toward polar residues: residues 124–142 and 149–167; these read PQNSMHGSPASNYQQTTIT and YVQTQAGSGSRYMPQQNSP. Disordered stretches follow at residues 124 to 197, 246 to 367, 439 to 494, and 525 to 1017; these read PQNS…PIQQ, NDEG…SDAE, RESA…AGNK, and EGPV…FPNY. The span at 276 to 290 shows a compositional bias: pro residues; that stretch reads GPRPPLILQSPPPYT. The segment covering 439-457 has biased composition (basic and acidic residues); sequence RESAIERERCSKEVQDKDK. Positions 471 to 480 are enriched in low complexity; the sequence is PGAAGTAGAS. A compositionally biased stretch (gly residues) spans 481 to 490; it reads GTPGVGGGCN. Basic and acidic residues-rich tracts occupy residues 556-577, 586-955, and 962-1005; these read SKTDGEVQRTVDGRPEVIKQRV, VDGR…EQRS, and VKQE…HKPQ. The PxVxL motif signature appears at 1068-1081; the sequence is NKGAKPVVVLKKLS. Disordered regions lie at residues 1088–1229 and 1724–1747; these read MISN…EPKL and TEKAMKSQRDDDSSDGPHHAKDVE. Over residues 1090–1100 the composition is skewed to low complexity; sequence SNSRSSKSSRS. 2 stretches are compositionally biased toward basic and acidic residues: residues 1104–1119 and 1156–1183; these read RFRETDSRLPLCERVK and KDRDKTWEYEEKDRRGSGDHRRSFDSRR. The segment covering 1212 to 1223 has biased composition (basic residues); the sequence is KLKKKEKQKKRK. HEAT repeat units follow at residues 1803-1841, 1879-1917, 1981-2020, 2203-2241, and 2349-2387; these read AQSFDIYLTQILRVLGESAIAVRTKAMKCLSEVVAVDPS, PQLTEQYYDMLIERILDTGISVRKRVIKILRDICLEQPT, YDWFEQLLQNLLKSEEDASYKPARKACAQLVDSLVEHILK, VVIKDKVLELLLYFTKNDDEEVQTKAIIGLGFLFIQDPG, and LIHPVQCVPYLIAMGTDSEPTMRNKADQQLVEIDKKYTG. 2 disordered regions span residues 2516–2590 and 2728–2774; these read EVVK…DSDL and ALLG…GHRN. The span at 2519-2537 shows a compositional bias: basic residues; sequence KKKKKKKKKKKQKQKRGKK. Low complexity predominate over residues 2548–2563; that stretch reads RSSSSSSSSSSSSSDS. The segment covering 2762–2774 has biased composition (basic and acidic residues); sequence RTGDSAEASGHRN.

It belongs to the SCC2/Nipped-B family.

It is found in the nucleus. Its function is as follows. May play a structural role in chromatin. Involved in sister chromatid cohesion, possibly by facilitating the cohesin complex loading. Transcription factor, which may promote cortical neuron migration during brain development by regulating the transcription of crucial genes in this process. The sequence is that of Nipped-B-like protein B (nipblb) from Danio rerio (Zebrafish).